Reading from the N-terminus, the 139-residue chain is Small ribosomal subunit protein uS12 (139 aa).

Asp102 is modified (3-methylthioaspartic acid).

This sequence belongs to the universal ribosomal protein uS12 family. In terms of assembly, part of the 30S ribosomal subunit. Contacts proteins S8 and S17. May interact with IF1 in the 30S initiation complex.

In terms of biological role, with S4 and S5 plays an important role in translational accuracy. Interacts with and stabilizes bases of the 16S rRNA that are involved in tRNA selection in the A site and with the mRNA backbone. Located at the interface of the 30S and 50S subunits, it traverses the body of the 30S subunit contacting proteins on the other side and probably holding the rRNA structure together. The combined cluster of proteins S8, S12 and S17 appears to hold together the shoulder and platform of the 30S subunit. The polypeptide is Small ribosomal subunit protein uS12 (Bacillus pumilus (strain SAFR-032)).